Consider the following 572-residue polypeptide: Proline--tRNA ligase (572 aa).

The protein belongs to the class-II aminoacyl-tRNA synthetase family. ProS type 1 subfamily. Homodimer.

It is found in the cytoplasm. The catalysed reaction is tRNA(Pro) + L-proline + ATP = L-prolyl-tRNA(Pro) + AMP + diphosphate. Its function is as follows. Catalyzes the attachment of proline to tRNA(Pro) in a two-step reaction: proline is first activated by ATP to form Pro-AMP and then transferred to the acceptor end of tRNA(Pro). As ProRS can inadvertently accommodate and process non-cognate amino acids such as alanine and cysteine, to avoid such errors it has two additional distinct editing activities against alanine. One activity is designated as 'pretransfer' editing and involves the tRNA(Pro)-independent hydrolysis of activated Ala-AMP. The other activity is designated 'posttransfer' editing and involves deacylation of mischarged Ala-tRNA(Pro). The misacylated Cys-tRNA(Pro) is not edited by ProRS. The polypeptide is Proline--tRNA ligase (Klebsiella pneumoniae (strain 342)).